We begin with the raw amino-acid sequence, 1042 residues long: Kinesin-like protein KIN-5A (1042 aa).

Residues 1-14 are compositionally biased toward low complexity; it reads MDSNNSKKGSSVKS. The interval 1-45 is disordered; the sequence is MDSNNSKKGSSVKSPCQTPRSTEKSNRDFRVDSNSNSNPVSKNEK. Residues 21–31 show a composition bias toward basic and acidic residues; sequence STEKSNRDFRV. The span at 32 to 41 shows a compositional bias: polar residues; that stretch reads DSNSNSNPVS. A Kinesin motor domain is found at 50-392; sequence NIQVIVRCRP…LDYAHRAKHI (343 aa). 136 to 143 contributes to the ATP binding site; sequence GQTGTGKT. Residues 480 to 517 adopt a coiled-coil conformation; the sequence is TAGLREKLDKTEKKLYETEQALLDLEEKHRQAVATIKE. Positions 1021–1042 are disordered; the sequence is KQMQNGEAKHVSNGRPPLTAIN.

Belongs to the TRAFAC class myosin-kinesin ATPase superfamily. Kinesin family. KIN-5/BimC subfamily.

It is found in the cytoplasm. Its subcellular location is the cytoskeleton. The protein resides in the spindle. Its function is as follows. Responsible for microtubule translocation. May be important for the organization of phragmoplast-specific arrays of microtubules. Plays an essential role in stabilizing the mitotic spindle. Required during mitotic cytokinesis. The sequence is that of Kinesin-like protein KIN-5A from Arabidopsis thaliana (Mouse-ear cress).